The following is a 460-amino-acid chain: MSKKKELLWQSRFSEPFDREALLFSSSVDVDKELYQEDITGSIAHVTMLSEEAIIPAEEARLIIEGLQEIEEEISTGSLVPHWEDEDIHTVIENRLKEKIGPIAGKIHSGRSRNDQVATDTRLYLKRSIEEIRQALKELKTVLVDKAEAYRRTIIFGYTHLQRAQPISAGHYYLAYFNMFDRDNQRLQDLYKRVDISPLGAAAFAGSTLALNAERSRDLLEFEGLFHNSIDAVSDRDIIIEFVSACSIIMMHLSRFAEDLILWSSYEFNYLEISDAFATGSSIMPQKKNADIAELVRGKTGRVYGDLMAMLTIMKGLPLSYNRDMQEDKPPLFDASKTTRSSVRIFTKMLENTSIKENRLSSLVAKDLSLATEIAEYLVQKNMPFRDAHRVTGKIVSHVIESGTTLPDMTLETYRTFSDLFDEDLYDALKPEASVNAKKTHGSTSFASVEEQIVSARTRI.

This sequence belongs to the lyase 1 family. Argininosuccinate lyase subfamily.

The protein localises to the cytoplasm. The enzyme catalyses 2-(N(omega)-L-arginino)succinate = fumarate + L-arginine. It functions in the pathway amino-acid biosynthesis; L-arginine biosynthesis; L-arginine from L-ornithine and carbamoyl phosphate: step 3/3. The chain is Argininosuccinate lyase from Prosthecochloris aestuarii (strain DSM 271 / SK 413).